Consider the following 215-residue polypeptide: Cytochrome b6 (215 aa).

Residues 32-52 form a helical membrane-spanning segment; sequence IFYCLGGITLTCFLIQFATGF. Residue Cys-35 coordinates heme c. Heme b-binding residues include His-86 and His-100. The next 3 membrane-spanning stretches (helical) occupy residues 90-110, 116-136, and 186-206; these read ASMM…TGGF, LTWV…VTGY, and LHTF…FLMI. 2 residues coordinate heme b: His-187 and His-202.

The protein belongs to the cytochrome b family. PetB subfamily. The 4 large subunits of the cytochrome b6-f complex are cytochrome b6, subunit IV (17 kDa polypeptide, PetD), cytochrome f and the Rieske protein, while the 4 small subunits are PetG, PetL, PetM and PetN. The complex functions as a dimer. It depends on heme b as a cofactor. Heme c is required as a cofactor.

The protein resides in the cellular thylakoid membrane. Its function is as follows. Component of the cytochrome b6-f complex, which mediates electron transfer between photosystem II (PSII) and photosystem I (PSI), cyclic electron flow around PSI, and state transitions. In Synechococcus elongatus, this protein is Cytochrome b6.